A 141-amino-acid chain; its full sequence is uncharacterized protein (141 aa).

The segment at 1 to 101 (FRGRAPRPLV…PDPGRSRRAT (101 aa)) is disordered. The segment covering 27–70 (QVRDCGREGDLRAGKAADRRLPRARETCSRFGEGVRQKDVHKGP) has biased composition (basic and acidic residues).

This is an uncharacterized protein from Dhori virus (strain Indian/1313/61) (Dho).